The primary structure comprises 48 residues: Large ribosomal subunit protein bL33 (48 aa).

It belongs to the bacterial ribosomal protein bL33 family.

The sequence is that of Large ribosomal subunit protein bL33 from Streptococcus mutans serotype c (strain ATCC 700610 / UA159).